Reading from the N-terminus, the 236-residue chain is Uridylate kinase (236 aa).

10 to 13 (KLSG) contacts ATP. Positions 18-23 (GEDGYG) are involved in allosteric activation by GTP. Residue glycine 52 participates in UMP binding. The ATP site is built by glycine 53 and arginine 57. Residues aspartate 72 and 133–140 (TGNPYFTT) each bind UMP. Positions 160, 166, and 169 each coordinate ATP.

The protein belongs to the UMP kinase family. In terms of assembly, homohexamer.

The protein localises to the cytoplasm. It carries out the reaction UMP + ATP = UDP + ADP. The protein operates within pyrimidine metabolism; CTP biosynthesis via de novo pathway; UDP from UMP (UMPK route): step 1/1. With respect to regulation, allosterically activated by GTP. Inhibited by UTP. Functionally, catalyzes the reversible phosphorylation of UMP to UDP. This Chlorobium phaeobacteroides (strain DSM 266 / SMG 266 / 2430) protein is Uridylate kinase.